We begin with the raw amino-acid sequence, 387 residues long: Alpha-2B adrenergic receptor (387 aa).

A helical transmembrane segment spans residues 1–25; that stretch reads AIAAVITFLILFTIFGNALVILAVL. Residues 26-36 lie on the Cytoplasmic side of the membrane; that stretch reads TSRSLRAPQNL. Residues 37-62 form a helical membrane-spanning segment; sequence FLVSLAAADILVATLIIPFSLANELL. Residues 63–72 are Extracellular-facing; that stretch reads GYWYFRHTWC. An intrachain disulfide couples Cys-72 to Cys-151. The helical transmembrane segment at 73–95 threads the bilayer; it reads XVYLALDVLFCTSSIVHLCAISL. Residues 96–117 are Cytoplasmic-facing; that stretch reads DRYWAVSRALEYNSKRTPRRIK. A helical transmembrane segment spans residues 118–140; it reads CIILTVWLIAAAISLPPLIYKGD. At 141–156 the chain is on the extracellular side; the sequence is QDPQPRGRPQCKLNQE. The chain crosses the membrane as a helical span at residues 157 to 180; the sequence is AWYILSSSIGSFFVPCLIMILVYL. The Cytoplasmic portion of the chain corresponds to 181–351; sequence RIYLIAKRSS…LTREKRFTFV (171 aa). The segment at 193-303 is disordered; it reads RKPRAKGXPR…VPASPALACS (111 aa). Over residues 279-290 the composition is skewed to acidic residues; that stretch reads PEEEAEEEEECG. Residues 352 to 375 traverse the membrane as a helical segment; the sequence is LAVVIGVFVLCWFPFFFSYSLGAI. Residues 376 to 384 lie on the Extracellular side of the membrane; it reads CPQHCKVPH. A helical transmembrane segment spans residues 385–387; the sequence is GLF.

It belongs to the G-protein coupled receptor 1 family. Adrenergic receptor subfamily. ADRA2B sub-subfamily. Interacts with RAB26. Interacts with PPP1R9B. Interacts with GGA1, GGA2 and GGA3.

Its subcellular location is the cell membrane. Functionally, alpha-2 adrenergic receptors mediate the catecholamine-induced inhibition of adenylate cyclase through the action of G proteins. This chain is Alpha-2B adrenergic receptor (ADRA2B), found in Macroscelides proboscideus (Short-eared elephant shrew).